The primary structure comprises 588 residues: L-fucose isomerase (588 aa).

Residues Glu335 and Asp359 each act as proton acceptor in the active site. Positions 335, 359, and 525 each coordinate Mn(2+).

Belongs to the L-fucose isomerase family. It depends on Mn(2+) as a cofactor.

The protein localises to the cytoplasm. It carries out the reaction L-fucose = L-fuculose. Its pathway is carbohydrate degradation; L-fucose degradation; L-lactaldehyde and glycerone phosphate from L-fucose: step 1/3. Converts the aldose L-fucose into the corresponding ketose L-fuculose. This is L-fucose isomerase from Streptococcus pneumoniae serotype 4 (strain ATCC BAA-334 / TIGR4).